We begin with the raw amino-acid sequence, 437 residues long: tRNA-2-methylthio-N(6)-dimethylallyladenosine synthase (437 aa).

One can recognise an MTTase N-terminal domain in the interval 5–121 (KKLYIKTYGC…LPELTARAAT (117 aa)). [4Fe-4S] cluster-binding residues include Cys14, Cys50, Cys84, Cys159, Cys163, and Cys166. A Radical SAM core domain is found at 145-371 (AKRGPTAFLT…QALLTRQQRA (227 aa)). The region spanning 374–436 (DAKVGTTARV…ANSLRGVLIA (63 aa)) is the TRAM domain.

The protein belongs to the methylthiotransferase family. MiaB subfamily. In terms of assembly, monomer. [4Fe-4S] cluster is required as a cofactor.

The protein resides in the cytoplasm. It catalyses the reaction N(6)-dimethylallyladenosine(37) in tRNA + (sulfur carrier)-SH + AH2 + 2 S-adenosyl-L-methionine = 2-methylsulfanyl-N(6)-dimethylallyladenosine(37) in tRNA + (sulfur carrier)-H + 5'-deoxyadenosine + L-methionine + A + S-adenosyl-L-homocysteine + 2 H(+). Functionally, catalyzes the methylthiolation of N6-(dimethylallyl)adenosine (i(6)A), leading to the formation of 2-methylthio-N6-(dimethylallyl)adenosine (ms(2)i(6)A) at position 37 in tRNAs that read codons beginning with uridine. This Dinoroseobacter shibae (strain DSM 16493 / NCIMB 14021 / DFL 12) protein is tRNA-2-methylthio-N(6)-dimethylallyladenosine synthase.